A 325-amino-acid polypeptide reads, in one-letter code: Terpene synthase 11 (325 aa).

The DDxx(x)D/E motif signature appears at 97–102 (DDEYLE). Positions 227–235 (NDIYSFVKE) match the NDxxSxxxD/E motif motif.

Belongs to the terpene synthase family.

It catalyses the reaction (2E,6E)-farnesyl diphosphate = (E)-beta-farnesene + diphosphate. The catalysed reaction is (2E,6E)-farnesyl diphosphate = (3E,6E)-alpha-farnesene + diphosphate. It carries out the reaction geranylgeranyl diphosphate + H2O = (S)-(+)-nephthenol + diphosphate. In terms of biological role, terpene synthase that converts its substrate farnesyl diphosphate (FPP) into the sesquiterpenes (E)-beta-farnesene and (E,E)-alpha-farnesene. TPS11 also converts geranylgeranyl diphosphate (GGPP) into the diterpene (S)-nephthenol. This chain is Terpene synthase 11, found in Dictyostelium purpureum (Slime mold).